Consider the following 374-residue polypeptide: tRNA-specific 2-thiouridylase MnmA (374 aa).

Residues 10–17 and Leu36 contribute to the ATP site; that span reads AMSGGVDS. Cys111 acts as the Nucleophile in catalysis. A disulfide bond links Cys111 and Cys209. An ATP-binding site is contributed by Gly135. Positions 159–161 are interaction with tRNA; the sequence is KDQ. The active-site Cysteine persulfide intermediate is the Cys209.

It belongs to the MnmA/TRMU family.

It is found in the cytoplasm. The catalysed reaction is S-sulfanyl-L-cysteinyl-[protein] + uridine(34) in tRNA + AH2 + ATP = 2-thiouridine(34) in tRNA + L-cysteinyl-[protein] + A + AMP + diphosphate + H(+). Catalyzes the 2-thiolation of uridine at the wobble position (U34) of tRNA, leading to the formation of s(2)U34. The sequence is that of tRNA-specific 2-thiouridylase MnmA from Acidobacterium capsulatum (strain ATCC 51196 / DSM 11244 / BCRC 80197 / JCM 7670 / NBRC 15755 / NCIMB 13165 / 161).